The primary structure comprises 270 residues: Oxidoreductase claK (270 aa).

This sequence belongs to the avfA family.

It functions in the pathway pigment biosynthesis. Its function is as follows. Oxidoreductase; part of the gene cluster that mediates the biosynthesis of the bianthraquinone cladofulvin, a conidial pigment not required for virulence but that plays a role in fitness and resistance to environmental stresses including UV light and low-temperature stress. The pathway begins with the synthesis of atrochrysone thioester by the polyketide synthase (PKS) claG. The atrochrysone carboxyl ACP thioesterase claF then breaks the thioester bond and releases the atrochrysone carboxylic acid from claG. This compound is decarboxylated by claH to yield emodin, which is further converted to chrysophanol hydroquinone by the reductase claC and the dehydratase claB. The cytochrome monooxygenase P450 claM then catalyzes the dimerization of nataloe-emodin to cladofulvin. The polypeptide is Oxidoreductase claK (Passalora fulva (Tomato leaf mold)).